The following is an 837-amino-acid chain: Phosphatidylinositol-glycan-specific phospholipase D (837 aa).

A signal peptide spans 1-23 (MSAGRLWSSLLLLLPLFCSKSSS). Residues asparagine 94, asparagine 267, asparagine 287, asparagine 303, and asparagine 317 are each glycosylated (N-linked (GlcNAc...) asparagine). FG-GAP repeat units follow at residues 364–425 (SPSA…GLPP), 431–492 (NKEG…GRLS), 494–554 (SPNV…RNDK), 561–619 (EADW…SLGK), 629–689 (QSTI…GATR), 701–767 (ALLS…TLGD), and 785–837 (QYVL…FSSD). 5 N-linked (GlcNAc...) asparagine glycosylation sites follow: asparagine 477, asparagine 496, asparagine 586, asparagine 599, and asparagine 655.

It belongs to the GPLD1 family. As to quaternary structure, monomer. Widely expressed.

The protein resides in the secreted. It carries out the reaction a 6-(alpha-D-glucosaminyl)-1-(1,2-diacyl-sn-glycero-3-phospho)-1D-myo-inositol + H2O = 6-(alpha-D-glucosaminyl)-1D-myo-inositol + a 1,2-diacyl-sn-glycero-3-phosphate + H(+). This protein hydrolyzes the inositol phosphate linkage in proteins anchored by phosphatidylinositol glycans (GPI-anchor) thus releasing these proteins from the membrane. The polypeptide is Phosphatidylinositol-glycan-specific phospholipase D (Gpld1) (Mus musculus (Mouse)).